The sequence spans 30 residues: Snake venom serine protease (30 aa).

One can recognise a Peptidase S1 domain in the interval 1-30 (VIGGDECNINEHRFLVALYDPDGFLSGGIL).

This sequence belongs to the peptidase S1 family. Snake venom subfamily. As to quaternary structure, monomer. N-Glycosylated. Expressed by the venom gland.

Its subcellular location is the secreted. Its activity is regulated as follows. Inhibited by diisopropylfluorophosphate (DFP). In terms of biological role, snake venom serine protease that catalyzes the hydrolysis of arginine esters, kallikrein substrates Pro-Phe-Arg-MCA and Z-Phe-Arg-MCA. Cleaves kininogen analogs to release bradykinin. Induces contraction of the isolated rat uterus directly at high concentrations, but provokes more forceful contractions when injected in presence of bovine plasma. Shows capillary permeability-increasing activity and hypotensive activity on the anesthetized rat. This is Snake venom serine protease from Crotalus viridis viridis (Prairie rattlesnake).